Reading from the N-terminus, the 969-residue chain is RNA polymerase-associated protein RapA (969 aa).

A Helicase ATP-binding domain is found at 164–334; it reads EVGRRHAPRV…FARLRLLDSD (171 aa). Residue 177–184 coordinates ATP; the sequence is DEVGLGKT. The DEAH box motif lies at 280 to 283; that stretch reads DEAH. The Helicase C-terminal domain maps to 492–668; the sequence is RVNWLLEKLK…GSNEALNDVI (177 aa).

Belongs to the SNF2/RAD54 helicase family. RapA subfamily. Interacts with the RNAP. Has a higher affinity for the core RNAP than for the holoenzyme. Its ATPase activity is stimulated by binding to RNAP.

In terms of biological role, transcription regulator that activates transcription by stimulating RNA polymerase (RNAP) recycling in case of stress conditions such as supercoiled DNA or high salt concentrations. Probably acts by releasing the RNAP, when it is trapped or immobilized on tightly supercoiled DNA. Does not activate transcription on linear DNA. Probably not involved in DNA repair. The sequence is that of RNA polymerase-associated protein RapA from Vibrio vulnificus (strain YJ016).